A 424-amino-acid chain; its full sequence is MAKPNQRHACDRCHGQKLRCIHSGGGPCVRCAKAKATCSWSQSLRSNRLKRHNVPISDVPLACAQLATQSTDPNTPQFGAYMSQPSSAGVDIDINLLQTQFTDSTPWALPAGRYPSPASQEMETYNVGHTEADLPTTADWMWPAVANGPVQTTPPANWQQAFNQEWAMMASQHPVATMNTPSRTSPVSDAVDPPNTVCLLATIRELSELNVDLYAHEATVPRPPASLDEPISWKNKDFAIDRTFHLSQRLIEIVNKRYPRYLETARMQTPEGTPERTSESSPSGPPLDQGSCLLVLSCYTRLIETYDRIFANMQGCLDRSSVTAREDYVNMPSVQVGSFSLPHSSSLQIVLILQLARQLLTRMGEIIKAVQPEKGTNSADVTLSESATGGLLLSSALETVSAEEDRLMKRITKLRSTLIELNIL.

A DNA-binding region (zn(2)-C6 fungal-type) is located at residues 10–38 (CDRCHGQKLRCIHSGGGPCVRCAKAKATC). Residues 265–286 (ARMQTPEGTPERTSESSPSGPP) form a disordered region.

It is found in the nucleus. Its function is as follows. Transcription factor that regulates the expression of the gene cluster that mediates the biosynthesis of isoflavipucine. The sequence is that of Isoflavipucine cluster transcription factor ATEG_00326 from Aspergillus terreus (strain NIH 2624 / FGSC A1156).